Here is a 71-residue protein sequence, read N- to C-terminus: Pre-hexon-linking protein VIII (71 aa).

Belongs to the adenoviridae hexon-linking protein family. As to quaternary structure, interacts with the peripentonal hexons as well as the hexons in the facets. Part of a complex composed of the core-capsid bridging protein, the endosome lysis protein VI and the hexon-linking protein VIII; these interactions bridge the virus core to the capsid. In terms of processing, cleaved by the viral protease during virion maturation. May cause the middle segment to be shed from the capsid.

It localises to the host nucleus. The protein localises to the virion. Structural component of the virion that acts as a cement protein on the capsid interior and which glue the peripentonal hexons and group-of-nine hexons together. In Canine adenovirus serotype 1 (strain Glaxo) (CAdV-1), this protein is Pre-hexon-linking protein VIII.